The following is a 209-amino-acid chain: Small ribosomal subunit protein mS23 (209 aa).

Belongs to the mitochondrion-specific ribosomal protein mS23 family. As to quaternary structure, component of the mitochondrial small ribosomal subunit.

The protein resides in the mitochondrion. The protein is Small ribosomal subunit protein mS23 (rsm25) of Sclerotinia sclerotiorum (strain ATCC 18683 / 1980 / Ss-1) (White mold).